We begin with the raw amino-acid sequence, 86 residues long: Omega-theraphotoxin-Hhn1f 4 (86 aa).

An N-terminal signal peptide occupies residues 1–21 (MKSIVFVALFGLALLAVVCSA). A propeptide spanning residues 22–50 (SEDAHKELLKEVVRAMVVDKTDAVQAGER) is cleaved from the precursor. 3 disulfide bridges follow: Cys-52–Cys-66, Cys-59–Cys-71, and Cys-65–Cys-78.

This sequence belongs to the neurotoxin 10 (Hwtx-1) family. 17 (Hntx-9) subfamily. Expressed by the venom gland.

It is found in the secreted. Its function is as follows. Ion channel inhibitor. In Cyriopagopus hainanus (Chinese bird spider), this protein is Omega-theraphotoxin-Hhn1f 4.